A 903-amino-acid chain; its full sequence is Protein translocase subunit SecA (903 aa).

ATP is bound by residues glutamine 87, 105 to 109, and aspartate 507; that span reads GEGKT. 2 disordered regions span residues 565-584 and 855-877; these read ESRR…GDPG and AEPG…LASQ. The Zn(2+) site is built by cysteine 887, cysteine 889, cysteine 898, and histidine 899.

It belongs to the SecA family. In terms of assembly, monomer and homodimer. Part of the essential Sec protein translocation apparatus which comprises SecA, SecYEG and auxiliary proteins SecDF-YajC and YidC. The cofactor is Zn(2+).

It is found in the cell inner membrane. The protein resides in the cytoplasm. It catalyses the reaction ATP + H2O + cellular proteinSide 1 = ADP + phosphate + cellular proteinSide 2.. Its function is as follows. Part of the Sec protein translocase complex. Interacts with the SecYEG preprotein conducting channel. Has a central role in coupling the hydrolysis of ATP to the transfer of proteins into and across the cell membrane, serving both as a receptor for the preprotein-SecB complex and as an ATP-driven molecular motor driving the stepwise translocation of polypeptide chains across the membrane. This chain is Protein translocase subunit SecA, found in Chromobacterium violaceum (strain ATCC 12472 / DSM 30191 / JCM 1249 / CCUG 213 / NBRC 12614 / NCIMB 9131 / NCTC 9757 / MK).